Here is a 429-residue protein sequence, read N- to C-terminus: Histidine--tRNA ligase (429 aa).

This sequence belongs to the class-II aminoacyl-tRNA synthetase family. In terms of assembly, homodimer.

The protein resides in the cytoplasm. It catalyses the reaction tRNA(His) + L-histidine + ATP = L-histidyl-tRNA(His) + AMP + diphosphate + H(+). The sequence is that of Histidine--tRNA ligase from Pelodictyon phaeoclathratiforme (strain DSM 5477 / BU-1).